A 319-amino-acid chain; its full sequence is Protein-methionine-sulfoxide reductase catalytic subunit MsrP (319 aa).

A signal peptide (tat-type signal) is located at residues 1-40 (MHKLNENDVTPEHIFFERRKIIQSMGLMGAASLLPRFSLA). Mo-molybdopterin-binding positions include Asn-73, 76–77 (YE), Cys-131, Thr-166, Asn-218, Arg-223, and 234–236 (NIK).

It belongs to the MsrP family. Heterodimer of a catalytic subunit (MsrP) and a heme-binding subunit (MsrQ). Requires Mo-molybdopterin as cofactor. Post-translationally, predicted to be exported by the Tat system. The position of the signal peptide cleavage has not been experimentally proven.

It is found in the periplasm. It catalyses the reaction L-methionyl-[protein] + a quinone + H2O = L-methionyl-(S)-S-oxide-[protein] + a quinol. The enzyme catalyses L-methionyl-[protein] + a quinone + H2O = L-methionyl-(R)-S-oxide-[protein] + a quinol. Part of the MsrPQ system that repairs oxidized periplasmic proteins containing methionine sulfoxide residues (Met-O), using respiratory chain electrons. Thus protects these proteins from oxidative-stress damage caused by reactive species of oxygen and chlorine generated by the host defense mechanisms. MsrPQ is essential for the maintenance of envelope integrity under bleach stress, rescuing a wide series of structurally unrelated periplasmic proteins from methionine oxidation. The catalytic subunit MsrP is non-stereospecific, being able to reduce both (R-) and (S-) diastereoisomers of methionine sulfoxide. The sequence is that of Protein-methionine-sulfoxide reductase catalytic subunit MsrP from Pasteurella multocida (strain Pm70).